Reading from the N-terminus, the 95-residue chain is Co-chaperonin GroES (95 aa).

This sequence belongs to the GroES chaperonin family. In terms of assembly, heptamer of 7 subunits arranged in a ring. Interacts with the chaperonin GroEL.

It localises to the cytoplasm. Together with the chaperonin GroEL, plays an essential role in assisting protein folding. The GroEL-GroES system forms a nano-cage that allows encapsulation of the non-native substrate proteins and provides a physical environment optimized to promote and accelerate protein folding. GroES binds to the apical surface of the GroEL ring, thereby capping the opening of the GroEL channel. The polypeptide is Co-chaperonin GroES (Rickettsia bellii (strain RML369-C)).